A 127-amino-acid polypeptide reads, in one-letter code: Large ribosomal subunit protein bL20 (127 aa).

The protein belongs to the bacterial ribosomal protein bL20 family.

Functionally, binds directly to 23S ribosomal RNA and is necessary for the in vitro assembly process of the 50S ribosomal subunit. It is not involved in the protein synthesizing functions of that subunit. This chain is Large ribosomal subunit protein bL20, found in Corynebacterium aurimucosum (strain ATCC 700975 / DSM 44827 / CIP 107346 / CN-1) (Corynebacterium nigricans).